Reading from the N-terminus, the 325-residue chain is 5-dehydro-2-deoxygluconokinase (325 aa).

It belongs to the carbohydrate kinase PfkB family.

The catalysed reaction is 5-dehydro-2-deoxy-D-gluconate + ATP = 6-phospho-5-dehydro-2-deoxy-D-gluconate + ADP + H(+). It functions in the pathway polyol metabolism; myo-inositol degradation into acetyl-CoA; acetyl-CoA from myo-inositol: step 5/7. Catalyzes the phosphorylation of 5-dehydro-2-deoxy-D-gluconate (2-deoxy-5-keto-D-gluconate or DKG) to 6-phospho-5-dehydro-2-deoxy-D-gluconate (DKGP). In Listeria monocytogenes serotype 4a (strain HCC23), this protein is 5-dehydro-2-deoxygluconokinase.